Here is a 113-residue protein sequence, read N- to C-terminus: N-alpha-acetyltransferase 38, NatC auxiliary subunit (113 aa).

The segment at 1–29 (MAAVLEENGCSRQSSPGAGDSDAEAGDTA) is disordered. The Sm domain occupies 28–106 (TARHKLESLL…IVSIQVELES (79 aa)).

Belongs to the snRNP Sm proteins family. As to quaternary structure, component of the N-terminal acetyltransferase C (NatC) complex.

The protein localises to the cytoplasm. The protein resides in the nucleus. Auxillary component of the N-terminal acetyltransferase C (NatC) complex which catalyzes acetylation of N-terminal methionine residues. N-terminal acetylation protects proteins from ubiquitination and degradation by the N-end rule pathway. This Xenopus tropicalis (Western clawed frog) protein is N-alpha-acetyltransferase 38, NatC auxiliary subunit (naa38).